Consider the following 1370-residue polypeptide: DNA polymerase II large subunit (1370 aa).

2 disordered regions span residues 279–317 (IGAD…PRAA) and 1041–1081 (AGDA…DGGS).

The protein belongs to the archaeal DNA polymerase II family. Heterodimer of a large subunit and a small subunit. In terms of processing, this protein undergoes a protein self splicing that involves a post-translational excision of the intervening region (intein) followed by peptide ligation.

It catalyses the reaction DNA(n) + a 2'-deoxyribonucleoside 5'-triphosphate = DNA(n+1) + diphosphate. It carries out the reaction Exonucleolytic cleavage in the 3'- to 5'-direction to yield nucleoside 5'-phosphates.. Possesses two activities: a DNA synthesis (polymerase) and an exonucleolytic activity that degrades single-stranded DNA in the 3'- to 5'-direction. Has a template-primer preference which is characteristic of a replicative DNA polymerase. The sequence is that of DNA polymerase II large subunit (polC) from Halobacterium salinarum (strain ATCC 700922 / JCM 11081 / NRC-1) (Halobacterium halobium).